We begin with the raw amino-acid sequence, 364 residues long: DNA polymerase IV (364 aa).

One can recognise a UmuC domain in the interval 14–198 (IIHIDMDAFF…LPIEKFHGVG (185 aa)). Mg(2+)-binding residues include Asp18 and Asp116. The active site involves Glu117.

The protein belongs to the DNA polymerase type-Y family. As to quaternary structure, monomer. The cofactor is Mg(2+).

It is found in the cytoplasm. It catalyses the reaction DNA(n) + a 2'-deoxyribonucleoside 5'-triphosphate = DNA(n+1) + diphosphate. Poorly processive, error-prone DNA polymerase involved in untargeted mutagenesis. Copies undamaged DNA at stalled replication forks, which arise in vivo from mismatched or misaligned primer ends. These misaligned primers can be extended by PolIV. Exhibits no 3'-5' exonuclease (proofreading) activity. May be involved in translesional synthesis, in conjunction with the beta clamp from PolIII. This is DNA polymerase IV from Streptococcus pyogenes serotype M4 (strain MGAS10750).